Consider the following 215-residue polypeptide: Protein-methionine-sulfoxide reductase heme-binding subunit MsrQ (215 aa).

A run of 6 helical transmembrane segments spans residues 17 to 37 (AAIW…FYLA), 50 to 70 (FEHL…LVTP), 85 to 105 (ALGL…LVLD), 121 to 141 (PYIM…LTSN), 152 to 172 (WNTL…HFVL), and 177 to 197 (ITLE…YRLV).

It belongs to the MsrQ family. In terms of assembly, heterodimer of a catalytic subunit (MsrP) and a heme-binding subunit (MsrQ). FMN serves as cofactor. The cofactor is heme b.

The protein localises to the cell inner membrane. Functionally, part of the MsrPQ system that repairs oxidized periplasmic proteins containing methionine sulfoxide residues (Met-O), using respiratory chain electrons. Thus protects these proteins from oxidative-stress damage caused by reactive species of oxygen and chlorine generated by the host defense mechanisms. MsrPQ is essential for the maintenance of envelope integrity under bleach stress, rescuing a wide series of structurally unrelated periplasmic proteins from methionine oxidation. MsrQ provides electrons for reduction to the reductase catalytic subunit MsrP, using the quinone pool of the respiratory chain. The polypeptide is Protein-methionine-sulfoxide reductase heme-binding subunit MsrQ (Agrobacterium fabrum (strain C58 / ATCC 33970) (Agrobacterium tumefaciens (strain C58))).